The following is a 165-amino-acid chain: Transcription factor zip-10 (165 aa).

Residues 53–71 show a composition bias toward low complexity; sequence ASLGTSTTSSSRCSSTESS. Residues 53 to 99 form a disordered region; sequence ASLGTSTTSSSRCSSTESSAAPGKIRRGRPQQEIADGQDAHSQKKRH. A coiled-coil region spans residues 104-150; it reads ARQYRAQMRQKVENVKSLHDEKEQLELEVKALRQAVSGLQQENAQKD.

Its subcellular location is the nucleus. In terms of biological role, transcription factor that regulates the expression of genes in response to changes in temperature. In particular, binds to the promoter region of genes such as asp-17 in response to severe cold to warm temperature transitions to promote gene expression. Promotes stress-induced death, particularly in older animals, following cold shock followed by warming and this may have evolved as a form of kin survival under thermal stress conditions, favoring the survival of younger animals. This is Transcription factor zip-10 from Caenorhabditis elegans.